The primary structure comprises 426 residues: Histidine--tRNA ligase (426 aa).

Belongs to the class-II aminoacyl-tRNA synthetase family. Homodimer.

The protein localises to the cytoplasm. The enzyme catalyses tRNA(His) + L-histidine + ATP = L-histidyl-tRNA(His) + AMP + diphosphate + H(+). The chain is Histidine--tRNA ligase from Hydrogenovibrio crunogenus (strain DSM 25203 / XCL-2) (Thiomicrospira crunogena).